The chain runs to 295 residues: Accessory protein VasW (295 aa).

Functionally, plays an accessory role in VasX-mediated bacterial killing. The chain is Accessory protein VasW from Vibrio cholerae serotype O1 (strain ATCC 39315 / El Tor Inaba N16961).